The sequence spans 316 residues: Beta-ketoacyl-[acyl-carrier-protein] synthase III 1 (316 aa).

Residues C112 and H243 contribute to the active site. Positions 244-248 (QANYR) are ACP-binding. The active site involves N273.

Belongs to the thiolase-like superfamily. FabH family. As to quaternary structure, homodimer.

It localises to the cytoplasm. It catalyses the reaction malonyl-[ACP] + acetyl-CoA + H(+) = 3-oxobutanoyl-[ACP] + CO2 + CoA. The protein operates within lipid metabolism; fatty acid biosynthesis. Its function is as follows. Catalyzes the condensation reaction of fatty acid synthesis by the addition to an acyl acceptor of two carbons from malonyl-ACP. Catalyzes the first condensation reaction which initiates fatty acid synthesis and may therefore play a role in governing the total rate of fatty acid production. Possesses both acetoacetyl-ACP synthase and acetyl transacylase activities. Its substrate specificity determines the biosynthesis of branched-chain and/or straight-chain of fatty acids. The sequence is that of Beta-ketoacyl-[acyl-carrier-protein] synthase III 1 from Vibrio cholerae serotype O1 (strain ATCC 39315 / El Tor Inaba N16961).